The chain runs to 206 residues: MASTDFSKIETLKQLNASLADKSYIEGTAVSQADVTVFKAFQSAYPEFSRWFNHIASKADEFDSFPAASAAAAEEEEDDDVDLFGSDDEEADAEAEKLKAERIAAYNAKKAAKPAKPAAKSIVTLDVKPWDDETNLEEMVANVKAIEMEGLTWGAHQFIPIGFGIKKLQINCVVEDDKVSLDDLQQSIEEDEDHVQSTDIAAMQKL.

Position 2 is an N-acetylalanine (alanine 2). Lysine 13 is covalently cross-linked (Glycyl lysine isopeptide (Lys-Gly) (interchain with G-Cter in ubiquitin)). A phosphoserine mark is found at serine 31 and serine 86.

It belongs to the EF-1-beta/EF-1-delta family. The eukaryotic elongation factor 1 complex (eEF1) is probably a heterohexamer. Two trimeric complexes, each composed of eEF1A (TEF1 or TEF2), eEF1Balpha (EFB1) and eEF1Bgamma (CAM1 or TEF4), are probably dimerized via the eF1Bgamma subunits. eEF1Balpha interacts directly with eEF1A. eEF1Balpha and eEF1Bgamma form the eEF1B subcomplex with the GEF activity. Post-translationally, S-thiolated in response to oxidative stress, probably inhibiting the protein and causing a reduction in protein synthesis.

The protein operates within protein biosynthesis; polypeptide chain elongation. Catalytic subunit of the guanine nucleotide exchange factor (GEF) (eEF1B subcomplex) of the eukaryotic elongation factor 1 complex (eEF1). Stimulates the exchange of GDP for GTP on elongation factor 1A (eEF1A), probably by displacing GDP from the nucleotide binding pocket in eEF1A. The 30-fold higher concentration of GTP compared to GDP in cells favors the formation of eEF1A-GTP, which rapidly forms a ternary complex with aminoacyl-tRNA that in turn displaces eEF1B from the complex. This is Elongation factor 1-beta (EFB1) from Saccharomyces cerevisiae (strain ATCC 204508 / S288c) (Baker's yeast).